The primary structure comprises 545 residues: Membrane protein insertase YidC (545 aa).

A helical transmembrane segment spans residues 6–26 (FVLFVFFIFLSFLLWEQWQID). The disordered stretch occupies residues 32–69 (QAVAQTDGASRPAGDLPQRPSDDESDVTVHTEAPTQEG). A run of 4 helical transmembrane segments spans residues 354-374 (FFNN…ALFF), 425-445 (GGCL…WVLV), 462-482 (LSSK…MFIQ), and 500-520 (FFPL…VLYW).

Belongs to the OXA1/ALB3/YidC family. Type 1 subfamily. Interacts with the Sec translocase complex via SecD. Specifically interacts with transmembrane segments of nascent integral membrane proteins during membrane integration.

It is found in the cell inner membrane. In terms of biological role, required for the insertion and/or proper folding and/or complex formation of integral membrane proteins into the membrane. Involved in integration of membrane proteins that insert both dependently and independently of the Sec translocase complex, as well as at least some lipoproteins. Aids folding of multispanning membrane proteins. This Methylococcus capsulatus (strain ATCC 33009 / NCIMB 11132 / Bath) protein is Membrane protein insertase YidC.